We begin with the raw amino-acid sequence, 164 residues long: SsrA-binding protein (164 aa).

It belongs to the SmpB family.

It localises to the cytoplasm. Its function is as follows. Required for rescue of stalled ribosomes mediated by trans-translation. Binds to transfer-messenger RNA (tmRNA), required for stable association of tmRNA with ribosomes. tmRNA and SmpB together mimic tRNA shape, replacing the anticodon stem-loop with SmpB. tmRNA is encoded by the ssrA gene; the 2 termini fold to resemble tRNA(Ala) and it encodes a 'tag peptide', a short internal open reading frame. During trans-translation Ala-aminoacylated tmRNA acts like a tRNA, entering the A-site of stalled ribosomes, displacing the stalled mRNA. The ribosome then switches to translate the ORF on the tmRNA; the nascent peptide is terminated with the 'tag peptide' encoded by the tmRNA and targeted for degradation. The ribosome is freed to recommence translation, which seems to be the essential function of trans-translation. The sequence is that of SsrA-binding protein from Gluconobacter oxydans (strain 621H) (Gluconobacter suboxydans).